We begin with the raw amino-acid sequence, 230 residues long: Cytidylate kinase (230 aa).

Residue 14-22 (GPSGVGKSS) participates in ATP binding.

This sequence belongs to the cytidylate kinase family. Type 1 subfamily.

It is found in the cytoplasm. The enzyme catalyses CMP + ATP = CDP + ADP. It carries out the reaction dCMP + ATP = dCDP + ADP. This Buchnera aphidicola subsp. Baizongia pistaciae (strain Bp) protein is Cytidylate kinase.